A 283-amino-acid chain; its full sequence is Formamidopyrimidine-DNA glycosylase (283 aa).

Proline 2 serves as the catalytic Schiff-base intermediate with DNA. Residue glutamate 3 is the Proton donor of the active site. The active-site Proton donor; for beta-elimination activity is lysine 58. DNA contacts are provided by histidine 100, arginine 119, and arginine 162. The FPG-type zinc finger occupies 247–283; that stretch reads RVYGREGQPCVTPGCRGLVGRIVQSGRSSFHCPECQR. The active-site Proton donor; for delta-elimination activity is the arginine 273.

The protein belongs to the FPG family. Monomer. Zn(2+) is required as a cofactor.

It carries out the reaction Hydrolysis of DNA containing ring-opened 7-methylguanine residues, releasing 2,6-diamino-4-hydroxy-5-(N-methyl)formamidopyrimidine.. It catalyses the reaction 2'-deoxyribonucleotide-(2'-deoxyribose 5'-phosphate)-2'-deoxyribonucleotide-DNA = a 3'-end 2'-deoxyribonucleotide-(2,3-dehydro-2,3-deoxyribose 5'-phosphate)-DNA + a 5'-end 5'-phospho-2'-deoxyribonucleoside-DNA + H(+). Involved in base excision repair of DNA damaged by oxidation or by mutagenic agents. Acts as a DNA glycosylase that recognizes and removes damaged bases. Has a preference for oxidized purines, such as 7,8-dihydro-8-oxoguanine (8-oxoG). Has AP (apurinic/apyrimidinic) lyase activity and introduces nicks in the DNA strand. Cleaves the DNA backbone by beta-delta elimination to generate a single-strand break at the site of the removed base with both 3'- and 5'-phosphates. The protein is Formamidopyrimidine-DNA glycosylase of Cereibacter sphaeroides (strain ATCC 17025 / ATH 2.4.3) (Rhodobacter sphaeroides).